Reading from the N-terminus, the 357-residue chain is Chorismate synthase (357 aa).

R47 is a binding site for NADP(+). FMN-binding positions include 123-125 (RSS), G281, 296-300 (KPTSS), and R324.

The protein belongs to the chorismate synthase family. Homotetramer. It depends on FMNH2 as a cofactor.

The enzyme catalyses 5-O-(1-carboxyvinyl)-3-phosphoshikimate = chorismate + phosphate. Its pathway is metabolic intermediate biosynthesis; chorismate biosynthesis; chorismate from D-erythrose 4-phosphate and phosphoenolpyruvate: step 7/7. Its function is as follows. Catalyzes the anti-1,4-elimination of the C-3 phosphate and the C-6 proR hydrogen from 5-enolpyruvylshikimate-3-phosphate (EPSP) to yield chorismate, which is the branch point compound that serves as the starting substrate for the three terminal pathways of aromatic amino acid biosynthesis. This reaction introduces a second double bond into the aromatic ring system. This Chlamydia muridarum (strain MoPn / Nigg) protein is Chorismate synthase.